Consider the following 554-residue polypeptide: Probable urocanate hydratase (554 aa).

Residues 49–50 (GG), Gln127, Glu194, 240–241 (NA), 261–265 (QTAAH), 271–272 (YI), and Tyr320 each bind NAD(+). Cys408 is an active-site residue. Position 490 (Gly490) interacts with NAD(+).

Belongs to the urocanase family. NAD(+) serves as cofactor.

Its subcellular location is the cytoplasm. It carries out the reaction 4-imidazolone-5-propanoate = trans-urocanate + H2O. Its pathway is amino-acid degradation; L-histidine degradation into L-glutamate; N-formimidoyl-L-glutamate from L-histidine: step 2/3. Functionally, catalyzes the conversion of urocanate to 4-imidazolone-5-propionate. The polypeptide is Probable urocanate hydratase (Thermoplasma acidophilum (strain ATCC 25905 / DSM 1728 / JCM 9062 / NBRC 15155 / AMRC-C165)).